A 282-amino-acid chain; its full sequence is Phycocyanobilin lyase subunit beta (282 aa).

The protein belongs to the CpcE/RpcE/PecE family. In terms of assembly, cpcE and CpcF associate to form a lyase.

Functionally, required for the chromophorylation of the CpcA gene product. The protein is Phycocyanobilin lyase subunit beta (cpcF1) of Pseudanabaena tenuis (strain PCC 7409).